Here is an 86-residue protein sequence, read N- to C-terminus: Sec-independent protein translocase protein TatA (86 aa).

A helical membrane pass occupies residues 1-21 (MGGISIWQLLIIAVIVVLLFG). Residues 42-86 (AIGDDNQPQQAQKTSSDADFETKNITEKQSVAQSETSESKNKEQV) form a disordered region. 2 stretches are compositionally biased toward polar residues: residues 47-58 (NQPQQAQKTSSD) and 68-77 (EKQSVAQSET).

Belongs to the TatA/E family. As to quaternary structure, the Tat system comprises two distinct complexes: a TatABC complex, containing multiple copies of TatA, TatB and TatC subunits, and a separate TatA complex, containing only TatA subunits. Substrates initially bind to the TatABC complex, which probably triggers association of the separate TatA complex to form the active translocon.

It is found in the cell inner membrane. In terms of biological role, part of the twin-arginine translocation (Tat) system that transports large folded proteins containing a characteristic twin-arginine motif in their signal peptide across membranes. TatA could form the protein-conducting channel of the Tat system. The chain is Sec-independent protein translocase protein TatA from Photorhabdus laumondii subsp. laumondii (strain DSM 15139 / CIP 105565 / TT01) (Photorhabdus luminescens subsp. laumondii).